A 289-amino-acid polypeptide reads, in one-letter code: Lipoyl synthase 2 (289 aa).

[4Fe-4S] cluster-binding residues include Cys-43, Cys-48, Cys-54, Cys-69, Cys-73, Cys-76, and Ser-282. Residues Tyr-55–Ala-271 form the Radical SAM core domain.

The protein belongs to the radical SAM superfamily. Lipoyl synthase family. [4Fe-4S] cluster is required as a cofactor.

Its subcellular location is the cytoplasm. It catalyses the reaction [[Fe-S] cluster scaffold protein carrying a second [4Fe-4S](2+) cluster] + N(6)-octanoyl-L-lysyl-[protein] + 2 oxidized [2Fe-2S]-[ferredoxin] + 2 S-adenosyl-L-methionine + 4 H(+) = [[Fe-S] cluster scaffold protein] + N(6)-[(R)-dihydrolipoyl]-L-lysyl-[protein] + 4 Fe(3+) + 2 hydrogen sulfide + 2 5'-deoxyadenosine + 2 L-methionine + 2 reduced [2Fe-2S]-[ferredoxin]. The protein operates within protein modification; protein lipoylation via endogenous pathway; protein N(6)-(lipoyl)lysine from octanoyl-[acyl-carrier-protein]: step 2/2. In terms of biological role, catalyzes the radical-mediated insertion of two sulfur atoms into the C-6 and C-8 positions of the octanoyl moiety bound to the lipoyl domains of lipoate-dependent enzymes, thereby converting the octanoylated domains into lipoylated derivatives. In Gloeobacter violaceus (strain ATCC 29082 / PCC 7421), this protein is Lipoyl synthase 2.